The primary structure comprises 113 residues: Protein Wnt-10 (113 aa).

Serine 1 carries O-palmitoleoyl serine; by PORCN lipidation. A disulfide bond links cysteine 79 and cysteine 94.

Belongs to the Wnt family. Palmitoleoylation is required for efficient binding to frizzled receptors. Depalmitoleoylation leads to Wnt signaling pathway inhibition.

The protein localises to the secreted. Its subcellular location is the extracellular space. It localises to the extracellular matrix. In terms of biological role, ligand for members of the frizzled family of seven transmembrane receptors. Probable developmental protein. May be a signaling molecule which affects the development of discrete regions of tissues. Is likely to signal over only few cell diameters. The protein is Protein Wnt-10 (WNT-10) of Eptatretus stoutii (Pacific hagfish).